A 223-amino-acid chain; its full sequence is 2-C-methyl-D-erythritol 4-phosphate cytidylyltransferase (223 aa).

This sequence belongs to the IspD/TarI cytidylyltransferase family. IspD subfamily.

The catalysed reaction is 2-C-methyl-D-erythritol 4-phosphate + CTP + H(+) = 4-CDP-2-C-methyl-D-erythritol + diphosphate. It participates in isoprenoid biosynthesis; isopentenyl diphosphate biosynthesis via DXP pathway; isopentenyl diphosphate from 1-deoxy-D-xylulose 5-phosphate: step 2/6. Functionally, catalyzes the formation of 4-diphosphocytidyl-2-C-methyl-D-erythritol from CTP and 2-C-methyl-D-erythritol 4-phosphate (MEP). The polypeptide is 2-C-methyl-D-erythritol 4-phosphate cytidylyltransferase (Prochlorococcus marinus subsp. pastoris (strain CCMP1986 / NIES-2087 / MED4)).